The following is a 656-amino-acid chain: Putative L-type lectin-domain containing receptor kinase V.2 (656 aa).

A signal peptide spans 1-23; sequence MSLLLKMLLFSLFFFYMASISQC. The Extracellular segment spans residues 24 to 276; it reads SDPTGGQFSF…EDQERSLSSK (253 aa). Residues 29–248 form a legume-lectin like region; that stretch reads GQFSFNGYLY…SHYILGWSFN (220 aa). N-linked (GlcNAc...) asparagine glycosylation is found at Asn-78, Asn-124, Asn-159, Asn-190, and Asn-257. A helical membrane pass occupies residues 277 to 297; that stretch reads ILAISLSISGVTLVIVLILGV. Residues 298-656 lie on the Cytoplasmic side of the membrane; sequence MLFLKRKKFL…MTESFLSSGR (359 aa). The 282-residue stretch at 334 to 615 folds into the Protein kinase domain; that stretch reads FKNSEVLGKG…GVATLPHNLL (282 aa). ATP contacts are provided by residues 340–348 and Lys-363; that span reads LGKGGFGKV. Asp-459 (proton acceptor) is an active-site residue.

It in the C-terminal section; belongs to the protein kinase superfamily. Ser/Thr protein kinase family. This sequence in the N-terminal section; belongs to the leguminous lectin family.

It localises to the cell membrane. It carries out the reaction L-seryl-[protein] + ATP = O-phospho-L-seryl-[protein] + ADP + H(+). The catalysed reaction is L-threonyl-[protein] + ATP = O-phospho-L-threonyl-[protein] + ADP + H(+). The chain is Putative L-type lectin-domain containing receptor kinase V.2 (LECRK52) from Arabidopsis thaliana (Mouse-ear cress).